The chain runs to 652 residues: Acetyl-coenzyme A synthetase (652 aa).

Residues 191–194 (RAGR), T311, and N335 contribute to the CoA site. ATP contacts are provided by residues 387–389 (GEP), 411–416 (DTWWQT), D500, and R515. S523 lines the CoA pocket. ATP is bound at residue R526. 3 residues coordinate Mg(2+): V537, H539, and I542. R584 provides a ligand contact to CoA. K609 is modified (N6-acetyllysine).

This sequence belongs to the ATP-dependent AMP-binding enzyme family. The cofactor is Mg(2+). In terms of processing, acetylated. Deacetylation by the SIR2-homolog deacetylase activates the enzyme.

It catalyses the reaction acetate + ATP + CoA = acetyl-CoA + AMP + diphosphate. Its function is as follows. Catalyzes the conversion of acetate into acetyl-CoA (AcCoA), an essential intermediate at the junction of anabolic and catabolic pathways. Acs undergoes a two-step reaction. In the first half reaction, Acs combines acetate with ATP to form acetyl-adenylate (AcAMP) intermediate. In the second half reaction, it can then transfer the acetyl group from AcAMP to the sulfhydryl group of CoA, forming the product AcCoA. Enables the cell to use acetate during aerobic growth to generate energy via the TCA cycle, and biosynthetic compounds via the glyoxylate shunt. Acetylates CheY, the response regulator involved in flagellar movement and chemotaxis. This is Acetyl-coenzyme A synthetase from Sodalis glossinidius (strain morsitans).